We begin with the raw amino-acid sequence, 305 residues long: U6 small nuclear RNA (adenine-(43)-N(6))-methyltransferase (305 aa).

S-adenosyl-L-methionine is bound by residues arginine 87, glycine 112, glutamate 135, threonine 166, and asparagine 188. The tract at residues 197–221 (PNPLGGNTRNPERRPAPNNARTGSQ) is disordered.

It belongs to the methyltransferase superfamily. METTL16/RlmF family.

The catalysed reaction is adenosine in U6 snRNA + S-adenosyl-L-methionine = N(6)-methyladenosine in U6 snRNA + S-adenosyl-L-homocysteine + H(+). Its function is as follows. RNA N6-methyltransferase that mediates N6-methylation of adenine of U6 small nuclear RNA (U6 snRNA). The protein is U6 small nuclear RNA (adenine-(43)-N(6))-methyltransferase of Drosophila melanogaster (Fruit fly).